The sequence spans 97 residues: YcgL domain-containing protein PputW619_3899 (97 aa).

The region spanning 3 to 87 is the YcgL domain; it reads RICSIYKSPR…AEDEYIEHLP (85 aa).

The polypeptide is YcgL domain-containing protein PputW619_3899 (Pseudomonas putida (strain W619)).